Here is a 217-residue protein sequence, read N- to C-terminus: UPF0502 protein PFLU_2135 (217 aa).

It belongs to the UPF0502 family.

This is UPF0502 protein PFLU_2135 from Pseudomonas fluorescens (strain SBW25).